Reading from the N-terminus, the 211-residue chain is Protein-methionine-sulfoxide reductase heme-binding subunit MsrQ (211 aa).

The next 5 membrane-spanning stretches (helical) occupy residues 10-30, 82-102, 116-136, 153-173, and 178-198; these read WLKVCLHLAGLLPFLWLVWAI, LWCFAWATLHLTSYALLELGV, PYLTLGIISWVILLALAFTST, FVYLVAILAPIHYLWSVKIIS, and IYAGLAVLLLALRYKKLLSLF.

This sequence belongs to the MsrQ family. Heterodimer of a catalytic subunit (MsrP) and a heme-binding subunit (MsrQ). FMN serves as cofactor. Heme b is required as a cofactor.

It is found in the cell inner membrane. Its function is as follows. Part of the MsrPQ system that repairs oxidized periplasmic proteins containing methionine sulfoxide residues (Met-O), using respiratory chain electrons. Thus protects these proteins from oxidative-stress damage caused by reactive species of oxygen and chlorine generated by the host defense mechanisms. MsrPQ is essential for the maintenance of envelope integrity under bleach stress, rescuing a wide series of structurally unrelated periplasmic proteins from methionine oxidation, including the primary periplasmic chaperone SurA and the lipoprotein Pal. MsrQ provides electrons for reduction to the reductase catalytic subunit MsrP, using the quinone pool of the respiratory chain. In Escherichia coli (strain 55989 / EAEC), this protein is Protein-methionine-sulfoxide reductase heme-binding subunit MsrQ.